Consider the following 323-residue polypeptide: MTMALASSKAFSSIFNTLSPINQSKFVLACSGSNHVDVIDRRRRIMIFGSSLALTSSLLGSNQQRLPMESAIALEQFKEKEEELEEEEERNVNLFQKTSPSVVYIEAIELPKTSSGDILTDEENGKIEGTGSGFVWDKLGHIVTNYHVIAKLATDQFGLQRCKVSLVDAKGTRFSKEGKIVGLDPDNDLAVLKIETEGRELNPVVLGTSNDLRVGQSCFAIGNPYGYENTLTIGVVSGLGREIPSPNGKSISEAIQTDADINSGNSGGPLLDSYGHTIGVNTATFTRKGSGMSSGVNFAIPIDTVVRTVPYLIVYGTAYRDRF.

The N-terminal 28 residues, 1-28 (MTMALASSKAFSSIFNTLSPINQSKFVL), are a transit peptide targeting the chloroplast. Residues 29–73 (ACSGSNHVDVIDRRRRIMIFGSSLALTSSLLGSNQQRLPMESAIA) constitute a thylakoid transit peptide. Catalysis depends on charge relay system residues H147, D188, and S266. Positions 186 to 283 (DNDLAVLKIE…YGHTIGVNTA (98 aa)) are serine protease.

It belongs to the peptidase S1C family.

The protein localises to the plastid. It is found in the chloroplast thylakoid lumen. Probable serine protease. The chain is Protease Do-like 5, chloroplastic (DEGP5) from Arabidopsis thaliana (Mouse-ear cress).